Here is a 160-residue protein sequence, read N- to C-terminus: Transcription elongation factor GreA (160 aa).

The stretch at 49-75 (SEYDEAKNDQAFTEGKILQLENKLKNA) forms a coiled coil.

This sequence belongs to the GreA/GreB family.

Necessary for efficient RNA polymerase transcription elongation past template-encoded arresting sites. The arresting sites in DNA have the property of trapping a certain fraction of elongating RNA polymerases that pass through, resulting in locked ternary complexes. Cleavage of the nascent transcript by cleavage factors such as GreA or GreB allows the resumption of elongation from the new 3'terminus. GreA releases sequences of 2 to 3 nucleotides. The sequence is that of Transcription elongation factor GreA from Clostridium botulinum (strain Alaska E43 / Type E3).